Here is a 407-residue protein sequence, read N- to C-terminus: F-box protein SKIP23 (407 aa).

One can recognise an F-box domain in the interval Val-2–Leu-50.

In terms of assembly, part of a SCF (ASK-cullin-F-box) protein ligase complex. Interacts with SKP1A/ASK1.

The protein localises to the nucleus. Its pathway is protein modification; protein ubiquitination. Its function is as follows. Component of SCF(ASK-cullin-F-box) E3 ubiquitin ligase complexes, which may mediate the ubiquitination and subsequent proteasomal degradation of target proteins. The sequence is that of F-box protein SKIP23 (SKIP23) from Arabidopsis thaliana (Mouse-ear cress).